A 158-amino-acid polypeptide reads, in one-letter code: uncharacterized protein (158 aa).

The region spanning 13 to 110 is the HTH hxlR-type domain; that stretch reads ESVGRALELV…WGDEYLPRPE (98 aa).

This is an uncharacterized protein from Mycobacterium tuberculosis (strain CDC 1551 / Oshkosh).